A 209-amino-acid polypeptide reads, in one-letter code: Ribosomal RNA large subunit methyltransferase E (209 aa).

Residues G63, W65, D83, D99, and D124 each contribute to the S-adenosyl-L-methionine site. K164 (proton acceptor) is an active-site residue. The 19-residue stretch at 191-209 folds into the TRAM domain; the sequence is EASRGRSREVYIVATGYKG.

It belongs to the class I-like SAM-binding methyltransferase superfamily. RNA methyltransferase RlmE family.

The protein localises to the cytoplasm. It catalyses the reaction uridine(2552) in 23S rRNA + S-adenosyl-L-methionine = 2'-O-methyluridine(2552) in 23S rRNA + S-adenosyl-L-homocysteine + H(+). Its function is as follows. Specifically methylates the uridine in position 2552 of 23S rRNA at the 2'-O position of the ribose in the fully assembled 50S ribosomal subunit. The polypeptide is Ribosomal RNA large subunit methyltransferase E (Haemophilus influenzae (strain 86-028NP)).